An 88-amino-acid polypeptide reads, in one-letter code: Small ribosomal subunit protein uS15 (88 aa).

It belongs to the universal ribosomal protein uS15 family. In terms of assembly, part of the 30S ribosomal subunit. Forms a bridge to the 50S subunit in the 70S ribosome, contacting the 23S rRNA.

Functionally, one of the primary rRNA binding proteins, it binds directly to 16S rRNA where it helps nucleate assembly of the platform of the 30S subunit by binding and bridging several RNA helices of the 16S rRNA. Its function is as follows. Forms an intersubunit bridge (bridge B4) with the 23S rRNA of the 50S subunit in the ribosome. The polypeptide is Small ribosomal subunit protein uS15 (Borreliella burgdorferi (strain ATCC 35210 / DSM 4680 / CIP 102532 / B31) (Borrelia burgdorferi)).